A 336-amino-acid polypeptide reads, in one-letter code: Dihydroorotate dehydrogenase (quinone) (336 aa).

Residues 62–66 and T86 each bind FMN; that span reads AGLDK. K66 is a binding site for substrate. 111 to 115 provides a ligand contact to substrate; it reads NRMGF. The FMN site is built by N139 and N172. N172 contributes to the substrate binding site. S175 acts as the Nucleophile in catalysis. N177 contributes to the substrate binding site. FMN contacts are provided by K217 and T245. 246–247 contacts substrate; sequence NT. FMN-binding positions include G268, G297, and 318–319; that span reads YS.

This sequence belongs to the dihydroorotate dehydrogenase family. Type 2 subfamily. In terms of assembly, monomer. It depends on FMN as a cofactor.

It is found in the cell membrane. The catalysed reaction is (S)-dihydroorotate + a quinone = orotate + a quinol. It participates in pyrimidine metabolism; UMP biosynthesis via de novo pathway; orotate from (S)-dihydroorotate (quinone route): step 1/1. Functionally, catalyzes the conversion of dihydroorotate to orotate with quinone as electron acceptor. This Escherichia coli (strain SE11) protein is Dihydroorotate dehydrogenase (quinone).